A 198-amino-acid polypeptide reads, in one-letter code: MRNNKNQMYIIKIFIALAMITGIIFLCLFYSSLTPSKLKIGAKTSNMDDSPKIKFTLIDQEGKKFDSTHLQGHLSLIYFGTTYSLYDNQALKRVEDIIKILKKENIVVQVVFITLDPQHDTSEVLKKYLEKIDDNFIGLTGRVQDIEQLADQFKVFYTSKIFDVKTNEYELQHSNFVYLISSQGKFLKHYCLGLPKNG.

Belongs to the SCO1/2 family.

The sequence is that of SCO2-like protein RF_0043 from Rickettsia felis (strain ATCC VR-1525 / URRWXCal2) (Rickettsia azadi).